The chain runs to 147 residues: uncharacterized protein (147 aa).

A helical transmembrane segment spans residues 71 to 91; that stretch reads IDILAFVAGTVGVGSLVLLQF.

Its subcellular location is the virion. It localises to the host membrane. This is an uncharacterized protein from Acanthamoeba polyphaga mimivirus (APMV).